A 558-amino-acid chain; its full sequence is MSNIEPSNVKPSNIELGTIPLAEAPATKLEAAYIAKKIAPNNSNPNAPVWVFVHGWGASANTWAPLVDELKSQCEIWLLDLPSFGGNTQAVNSPSAVAADIAKILPANTVLVGWSLGGMLLPLIAQQIEQHWPTKTISHCIGLAANAKFAQGDNYTAAMPAETFQTFCANFNVDPTTTWSRFGLLQAQGDSNRKLVSRQIKALHNAPMPEQFTAWQQALTWLGAIDNRVLLCEITTPFLHLFGEGDALVPADAAVAMAGINPLHQTLVVASAGHVLHFSQPAKIAQIMLARVHAKRNKARVAKSFSNAATEYDSVAYLQQKLANTLCEWVPEQAEKIADLGCGTGYCGLQLQRPERDIYSLDLAQGMLHTARSKALAKQQLFSGVCADIECLPFISNGFDALVSGMSMQWCEDLPAVFSEAHRVLKPNGEMIFSTLGPQTLFELREAWAEADIKLGRQGCVHVNTFIELDRVEIAAKQAGFVIEQTSREIHVLTYDSVMPLMRELKTIGAHNVNPGQEQGLTGKARLKAMAQAYEQFRTAQGVLPLTYEVGFYQLLKV.

Residues 1-287 (MSNIEPSNVK…FSQPAKIAQI (287 aa)) are carboxylesterase. Substrate is bound by residues W56, 115–116 (SL), and 182–186 (FGLLQ). Residue S115 is the Nucleophile of the active site. Residues D246 and H274 contribute to the active site. Residue H274 coordinates substrate. The tract at residues 288 to 558 (MLARVHAKRN…EVGFYQLLKV (271 aa)) is malonyl-ACP O-methyltransferase.

In the N-terminal section; belongs to the AB hydrolase superfamily. Carboxylesterase BioH family. This sequence in the C-terminal section; belongs to the methyltransferase superfamily.

It carries out the reaction a carboxylic ester + H2O = an alcohol + a carboxylate + H(+). The catalysed reaction is malonyl-[ACP] + S-adenosyl-L-methionine = malonyl-[ACP] methyl ester + S-adenosyl-L-homocysteine. Its pathway is cofactor biosynthesis; biotin biosynthesis. In terms of biological role, converts the free carboxyl group of a malonyl-thioester to its methyl ester by transfer of a methyl group from S-adenosyl-L-methionine (SAM). It allows to synthesize pimeloyl-ACP via the fatty acid synthetic pathway. The physiological role of BioH is to remove the methyl group introduced by BioC when the pimeloyl moiety is complete. It allows to synthesize pimeloyl-ACP via the fatty acid synthetic pathway through the hydrolysis of the ester bonds of pimeloyl-ACP esters. This Saccharophagus degradans (strain 2-40 / ATCC 43961 / DSM 17024) protein is Biotin biosynthesis bifunctional protein BioHC (bioC).